Consider the following 339-residue polypeptide: Ribosomal RNA small subunit methyltransferase H (339 aa).

S-adenosyl-L-methionine is bound by residues glycine 44 to tyrosine 46, aspartate 61, phenylalanine 88, aspartate 105, and glutamine 112. The segment at proline 263–alanine 312 is disordered. Over residues arginine 301–alanine 312 the composition is skewed to basic residues.

The protein belongs to the methyltransferase superfamily. RsmH family.

It is found in the cytoplasm. The catalysed reaction is cytidine(1402) in 16S rRNA + S-adenosyl-L-methionine = N(4)-methylcytidine(1402) in 16S rRNA + S-adenosyl-L-homocysteine + H(+). Specifically methylates the N4 position of cytidine in position 1402 (C1402) of 16S rRNA. The polypeptide is Ribosomal RNA small subunit methyltransferase H (Chelativorans sp. (strain BNC1)).